A 160-amino-acid chain; its full sequence is SsrA-binding protein (160 aa).

The interval 136 to 160 is disordered; it reads KRDTMRERDSNRELQRAVRNKGKED.

Belongs to the SmpB family.

It localises to the cytoplasm. In terms of biological role, required for rescue of stalled ribosomes mediated by trans-translation. Binds to transfer-messenger RNA (tmRNA), required for stable association of tmRNA with ribosomes. tmRNA and SmpB together mimic tRNA shape, replacing the anticodon stem-loop with SmpB. tmRNA is encoded by the ssrA gene; the 2 termini fold to resemble tRNA(Ala) and it encodes a 'tag peptide', a short internal open reading frame. During trans-translation Ala-aminoacylated tmRNA acts like a tRNA, entering the A-site of stalled ribosomes, displacing the stalled mRNA. The ribosome then switches to translate the ORF on the tmRNA; the nascent peptide is terminated with the 'tag peptide' encoded by the tmRNA and targeted for degradation. The ribosome is freed to recommence translation, which seems to be the essential function of trans-translation. The polypeptide is SsrA-binding protein (Pseudomonas putida (strain GB-1)).